An 83-amino-acid chain; its full sequence is UPF0270 protein CGSHiEE_07180 (83 aa).

This sequence belongs to the UPF0270 family.

This is UPF0270 protein CGSHiEE_07180 from Haemophilus influenzae (strain PittEE).